Reading from the N-terminus, the 134-residue chain is Small ribosomal subunit protein uS8c (134 aa).

This sequence belongs to the universal ribosomal protein uS8 family. In terms of assembly, part of the 30S ribosomal subunit.

The protein localises to the plastid. It localises to the chloroplast. Its function is as follows. One of the primary rRNA binding proteins, it binds directly to 16S rRNA central domain where it helps coordinate assembly of the platform of the 30S subunit. This Ipomoea purpurea (Common morning glory) protein is Small ribosomal subunit protein uS8c (rps8).